Consider the following 124-residue polypeptide: Holo-[acyl-carrier-protein] synthase (124 aa).

Mg(2+) is bound by residues aspartate 8 and glutamate 56.

This sequence belongs to the P-Pant transferase superfamily. AcpS family. It depends on Mg(2+) as a cofactor.

The protein localises to the cytoplasm. The catalysed reaction is apo-[ACP] + CoA = holo-[ACP] + adenosine 3',5'-bisphosphate + H(+). Functionally, transfers the 4'-phosphopantetheine moiety from coenzyme A to a Ser of acyl-carrier-protein. The chain is Holo-[acyl-carrier-protein] synthase from Nitratidesulfovibrio vulgaris (strain ATCC 29579 / DSM 644 / CCUG 34227 / NCIMB 8303 / VKM B-1760 / Hildenborough) (Desulfovibrio vulgaris).